Here is a 1580-residue protein sequence, read N- to C-terminus: Dynamin-binding protein (1580 aa).

Residue Met1 is modified to N-acetylmethionine. SH3 domains follow at residues 2 to 61 (EPGS…IVTI), 66 to 127 (EGER…ELCL), and 146 to 205 (YSLG…LLGP). 4 disordered regions span residues 211–245 (ESVN…DQQS), 304–446 (NRTE…LVPL), 500–546 (YAQK…DSLD), and 589–688 (RGSS…AQTF). Residues 229–243 (VPPEEAESGGDEDDQ) show a composition bias toward acidic residues. Positions 244 to 303 (QSGTYGIALYRFQALETNELDFEVGDRIQILGTLEDGWLEGCLKGKTGVFPHRFVKLCPS) constitute an SH3 4 domain. Polar residues-rich tracts occupy residues 422–439 (QKSQ…TSDP) and 502–513 (QKHQTSTENTAS). Residues 516-527 (DPPERPERRPGL) are compositionally biased toward basic and acidic residues. Residues 608-617 (RPPPPRPRTP) show a composition bias toward pro residues. Over residues 671 to 682 (APEKEDSEHMEK) the composition is skewed to basic and acidic residues. At Ser683 the chain carries Phosphoserine. A coiled-coil region spans residues 694–755 (LARIRDVEQD…LELQQLRDMT (62 aa)). The region spanning 783–970 (KRAKVVAELL…KEINVNINEY (188 aa)) is the DH domain. The BAR domain occupies 1011 to 1220 (LKHLTGFAPQ…LKATDREGNL (210 aa)). Positions 1288–1351 (PPEKLFHVQR…YSSFLKPYNP (64 aa)) constitute an SH3 5 domain. Residues 1356–1365 (SDASVASHSS) show a composition bias toward low complexity. 2 disordered regions span residues 1356–1384 (SDAS…NSHS) and 1426–1514 (TGHP…GSSE). A compositionally biased stretch (polar residues) spans 1426 to 1440 (TGHPETGPSTCSSDP). The 64-residue stretch at 1516–1579 (EGNQVYFAIY…PSNYIRKTEY (64 aa)) folds into the SH3 6 domain.

In terms of assembly, binds DNM1 via its N-terminal SH3 domains. The C-terminal SH3 domain binds a complex containing actin, tubulin, Hsp70 and actin-regulatory proteins, such as ENAH, EVL, WIRE, CR16, WAVE1 and NAP1L1. Interacts with FASLG. Interacts (via SH3 domain 6) with WASL. Interacts (via SH3 domain 6) interacts with ENAH. Interacts (via C-terminal domain) with TJP1; required for the apical cell-cell junction localization of DNMBP.

The protein localises to the cytoplasm. Its subcellular location is the golgi apparatus. It localises to the golgi stack. The protein resides in the cytoskeleton. It is found in the synapse. The protein localises to the cell junction. Plays a critical role as a guanine nucleotide exchange factor (GEF) for CDC42 in several intracellular processes associated with the actin and microtubule cytoskeleton. Regulates the structure of apical junctions in epithelial cells. Participates in the normal lumenogenesis of epithelial cell cysts by regulating spindle orientation. Plays a role in ciliogenesis. May play a role in membrane trafficking between the cell surface and the Golgi. This chain is Dynamin-binding protein, found in Mus musculus (Mouse).